Reading from the N-terminus, the 1016-residue chain is Coiled-coil domain-containing protein 57 (1016 aa).

The segment at 1–503 is centrosomal targeting domain; sequence MLPLCSEREL…HGLLPGQEAQ (503 aa). Coiled coils occupy residues 14-607, 676-700, and 748-775; these read LARK…PVKT, SEVDQVHLEVLELQKQVAELRKHLK, and VTHLQRKLKDAARKILSLRLEREQLLEM. Disordered stretches follow at residues 500–519 and 549–573; these read QEAQVPPQQHEGEIRADSPS and HLPPAQPEECSNADPDPKAGGDSTP. Positions 604-1016 are microtubule binding domain; sequence PVKTSVATAD…SRIRNYNLKD (413 aa). 2 disordered regions span residues 781–921 and 933–1016; these read AEQG…LASS and GSSP…NLKD. Composition is skewed to polar residues over residues 846–859 and 934–945; these read QPHSAQVGSKTNTP and SSPSGVPSQDNS.

Interacts with CEP63; the interaction is required for their location to proximal end of centrioles. Interacts with microtubules.

It is found in the cytoplasm. Its subcellular location is the cytoskeleton. The protein resides in the microtubule organizing center. It localises to the centrosome. The protein localises to the centriolar satellite. It is found in the centriole. Its subcellular location is the spindle. Pleiotropic regulator of centriole duplication, mitosis, and ciliogenesis. Critical interface between centrosome and microtubule-mediated cellular processes. Centriole duplication protein required for recruitment of CEP63, CEP152, and PLK4 to the centrosome. Independent of its centrosomal targeting, localizes to and interacts with microtubules and regulates microtubule nucleation, stability, and mitotic progression. The protein is Coiled-coil domain-containing protein 57 of Mus musculus (Mouse).